Reading from the N-terminus, the 1357-residue chain is DNA-directed RNA polymerase subunit beta (1357 aa).

The protein belongs to the RNA polymerase beta chain family. The RNAP catalytic core consists of 2 alpha, 1 beta, 1 beta' and 1 omega subunit. When a sigma factor is associated with the core the holoenzyme is formed, which can initiate transcription.

The catalysed reaction is RNA(n) + a ribonucleoside 5'-triphosphate = RNA(n+1) + diphosphate. DNA-dependent RNA polymerase catalyzes the transcription of DNA into RNA using the four ribonucleoside triphosphates as substrates. The sequence is that of DNA-directed RNA polymerase subunit beta from Pseudomonas putida (strain ATCC 700007 / DSM 6899 / JCM 31910 / BCRC 17059 / LMG 24140 / F1).